Here is a 99-residue protein sequence, read N- to C-terminus: Malonate decarboxylase acyl carrier protein (99 aa).

The residue at position 25 (Ser-25) is an O-(phosphoribosyl dephospho-coenzyme A)serine.

Belongs to the MdcC family. In terms of processing, covalently binds the prosthetic group of malonate decarboxylase.

The protein resides in the cytoplasm. Functionally, subunit of malonate decarboxylase, it is an acyl carrier protein to which acetyl and malonyl thioester residues are bound via a 2'-(5''-phosphoribosyl)-3'-dephospho-CoA prosthetic group and turn over during the catalytic mechanism. The protein is Malonate decarboxylase acyl carrier protein of Pseudomonas fluorescens (strain Pf0-1).